The primary structure comprises 141 residues: Nucleoside diphosphate kinase 1 (141 aa).

6 residues coordinate ATP: Lys-11, Phe-59, Arg-87, Thr-93, Arg-104, and Asn-114. His-117 serves as the catalytic Pros-phosphohistidine intermediate.

Belongs to the NDK family. As to quaternary structure, homotetramer. Mg(2+) serves as cofactor.

It localises to the cytoplasm. The catalysed reaction is a 2'-deoxyribonucleoside 5'-diphosphate + ATP = a 2'-deoxyribonucleoside 5'-triphosphate + ADP. It carries out the reaction a ribonucleoside 5'-diphosphate + ATP = a ribonucleoside 5'-triphosphate + ADP. Functionally, major role in the synthesis of nucleoside triphosphates other than ATP. The ATP gamma phosphate is transferred to the NDP beta phosphate via a ping-pong mechanism, using a phosphorylated active-site intermediate. This Protochlamydia amoebophila (strain UWE25) protein is Nucleoside diphosphate kinase 1.